Here is a 539-residue protein sequence, read N- to C-terminus: Glutamyl-tRNA(Gln) amidotransferase subunit A, mitochondrial (539 aa).

Catalysis depends on charge relay system residues lysine 94 and serine 181. Serine 205 functions as the Acyl-ester intermediate in the catalytic mechanism.

Belongs to the amidase family. GatA subfamily. Subunit of the heterotrimeric GatCAB amidotransferase (AdT) complex, composed of A, B and C subunits.

The protein localises to the mitochondrion. The catalysed reaction is L-glutamyl-tRNA(Gln) + L-glutamine + ATP + H2O = L-glutaminyl-tRNA(Gln) + L-glutamate + ADP + phosphate + H(+). Functionally, allows the formation of correctly charged Gln-tRNA(Gln) through the transamidation of misacylated Glu-tRNA(Gln) in the mitochondria. The reaction takes place in the presence of glutamine and ATP through an activated gamma-phospho-Glu-tRNA(Gln). In Mycosarcoma maydis (Corn smut fungus), this protein is Glutamyl-tRNA(Gln) amidotransferase subunit A, mitochondrial.